The chain runs to 127 residues: Aspartate 1-decarboxylase (127 aa).

The active-site Schiff-base intermediate with substrate; via pyruvic acid is Ser-25. A Pyruvic acid (Ser) modification is found at Ser-25. Thr-57 lines the substrate pocket. Catalysis depends on Tyr-58, which acts as the Proton donor. 73–75 serves as a coordination point for substrate; that stretch reads GAA.

The protein belongs to the PanD family. As to quaternary structure, heterooctamer of four alpha and four beta subunits. It depends on pyruvate as a cofactor. In terms of processing, is synthesized initially as an inactive proenzyme, which is activated by self-cleavage at a specific serine bond to produce a beta-subunit with a hydroxyl group at its C-terminus and an alpha-subunit with a pyruvoyl group at its N-terminus.

It is found in the cytoplasm. The enzyme catalyses L-aspartate + H(+) = beta-alanine + CO2. Its pathway is cofactor biosynthesis; (R)-pantothenate biosynthesis; beta-alanine from L-aspartate: step 1/1. Functionally, catalyzes the pyruvoyl-dependent decarboxylation of aspartate to produce beta-alanine. The sequence is that of Aspartate 1-decarboxylase from Bacillus cereus (strain G9842).